We begin with the raw amino-acid sequence, 60 residues long: MSSKGGSSGGMWSVFIHGHDGSNKGSKTYTSGGGGMWGGGSSSGVKSGVNGGVKSGTGKI.

A disordered region spans residues 1 to 60 (MSSKGGSSGGMWSVFIHGHDGSNKGSKTYTSGGGGMWGGGSSSGVKSGVNGGVKSGTGKI). Gly residues-rich tracts occupy residues 31–42 (SGGGGMWGGGSS) and 49–60 (VNGGVKSGTGKI).

Belongs to the orthopoxvirus OPG024 family.

This is OPG024 protein (OPG024) from Vaccinia virus (strain Western Reserve) (VACV).